The chain runs to 115 residues: Aspartate 1-decarboxylase (115 aa).

S25 acts as the Schiff-base intermediate with substrate; via pyruvic acid in catalysis. Residue S25 is modified to Pyruvic acid (Ser). T57 contributes to the substrate binding site. The active-site Proton donor is Y58. 73 to 75 serves as a coordination point for substrate; sequence GPA.

The protein belongs to the PanD family. In terms of assembly, heterooctamer of four alpha and four beta subunits. It depends on pyruvate as a cofactor. Post-translationally, is synthesized initially as an inactive proenzyme, which is activated by self-cleavage at a specific serine bond to produce a beta-subunit with a hydroxyl group at its C-terminus and an alpha-subunit with a pyruvoyl group at its N-terminus.

Its subcellular location is the cytoplasm. The catalysed reaction is L-aspartate + H(+) = beta-alanine + CO2. It participates in cofactor biosynthesis; (R)-pantothenate biosynthesis; beta-alanine from L-aspartate: step 1/1. Functionally, catalyzes the pyruvoyl-dependent decarboxylation of aspartate to produce beta-alanine. The chain is Aspartate 1-decarboxylase from Cytophaga hutchinsonii (strain ATCC 33406 / DSM 1761 / CIP 103989 / NBRC 15051 / NCIMB 9469 / D465).